A 377-amino-acid chain; its full sequence is [2-(trimethylamino)ethyl]phosphonate dioxygenase (377 aa).

Residues 95 to 119 are disordered; that stretch reads DTDQSSEVGRTSPDVETWDSSQPAP. Asn-187 lines the [2-(trimethylamino)ethyl]phosphonate pocket. His-198 lines the 2-oxoglutarate pocket. Fe(2+) contacts are provided by His-198 and Asp-200. The [2-(trimethylamino)ethyl]phosphonate site is built by Asp-200, Asn-201, Tyr-203, Asn-286, and Arg-288. 2-oxoglutarate-binding residues include His-341, Arg-343, and Arg-352. Residue His-341 coordinates Fe(2+).

This sequence belongs to the gamma-BBH/TMLD family. As to quaternary structure, homodimer. Fe(2+) serves as cofactor. L-ascorbate is required as a cofactor.

The catalysed reaction is [2-(trimethylamino)ethyl]phosphonate + 2-oxoglutarate + O2 = [(1R)-1-hydroxy-2-(trimethylamino)ethyl]phosphonate + succinate + CO2. Its function is as follows. Involved in the degradation of the naturally occurring organophosphonate 2-(trimethylammonio)ethylphosphonate (TMAEP). Catalyzes the hydroxylation of TMAEP to (R)-1-hydroxy-2-(trimethylammonio)ethylphosphonate (OH-TMAEP). Is highly specific for its N-trimethylated substrate. Cannot use gamma-butyrobetaine as substrate. This Leisingera caerulea (Phaeobacter caeruleus) protein is [2-(trimethylamino)ethyl]phosphonate dioxygenase.